Here is a 433-residue protein sequence, read N- to C-terminus: FAD-dependent monooxygenase notI' (433 aa).

Residues E45 and R117 each contribute to the FAD site. Residue R195 is part of the active site. FAD is bound by residues D314 and A327.

Belongs to the paxM FAD-dependent monooxygenase family. The cofactor is FAD.

Its pathway is alkaloid biosynthesis. Functionally, FAD-dependent monooxygenase; part of the gene cluster that mediates the biosynthesis of notoamide, a fungal indole alkaloid that belongs to a family of natural products containing a characteristic bicyclo[2.2.2]diazaoctane core. The first step of notoamide biosynthesis involves coupling of L-proline and L-tryptophan by the bimodular NRPS notE', to produce cyclo-L-tryptophan-L-proline called brevianamide F. The reverse prenyltransferase notF' then acts as a deoxybrevianamide E synthase and converts brevianamide F to deoxybrevianamide E via reverse prenylation at C-2 of the indole ring leading to the bicyclo[2.2.2]diazaoctane core. Deoxybrevianamide E is further hydroxylated at C-6 of the indole ring, likely catalyzed by the cytochrome P450 monooxygenase notG', to yield 6-hydroxy-deoxybrevianamide E. 6-hydroxy-deoxybrevianamide E is a specific substrate of the prenyltransferase notC' for normal prenylation at C-7 to produce 6-hydroxy-7-prenyl-deoxybrevianamide, also called notoamide S. As the proposed pivotal branching point in notoamide biosynthesis, notoamide S can be diverted to notoamide E through an oxidative pyran ring closure putatively catalyzed by either notH' cytochrome P450 monooxygenase or the notD' FAD-linked oxidoreductase. This step would be followed by an indole 2,3-epoxidation-initiated pinacol-like rearrangement catalyzed by the notB' FAD-dependent monooxygenase leading to the formation of notoamide C and notoamide D. On the other hand notoamide S is converted to notoamide T by notH' (or notD'), a bifunctional oxidase that also functions as the intramolecular Diels-Alderase responsible for generation of (-)-notoamide T. To generate antipodal (+)-notoaminide T, notH (or notD) in Aspergillus strain MF297-2 is expected to catalyze a Diels-Alder reaction leading to the opposite stereochemistry. The remaining oxidoreductase notD' (or notH') likely catalyzes the oxidative pyran ring formation to yield (-)-stephacidin A. The FAD-dependent monooxygenase notI' is highly similar to notB' and is predicted to catalyze a similar conversion from (-)-stephacidin A to (+)-notoamide B via the 2,3-epoxidation of (-)-stephacidin A followed by a pinacol-type rearrangement. Finally, it remains unclear which enzyme could be responsible for the final hydroxylation steps leading to notoamide A and sclerotiamide. The sequence is that of FAD-dependent monooxygenase notI' from Aspergillus versicolor.